Here is a 494-residue protein sequence, read N- to C-terminus: Cytochrome P450 2A10 (494 aa).

Position 379 is an N6-acetyllysine (lysine 379). A heme-binding site is contributed by cysteine 439.

This sequence belongs to the cytochrome P450 family. The cofactor is heme. Expressed in liver and lung as well as in nasal tissues.

The protein localises to the endoplasmic reticulum membrane. Its subcellular location is the microsome membrane. The enzyme catalyses an organic molecule + reduced [NADPH--hemoprotein reductase] + O2 = an alcohol + oxidized [NADPH--hemoprotein reductase] + H2O + H(+). Its function is as follows. Catalyzes the oxygenation of a variety of substrates, including ethanol and procarcinogens such as N-nitrosodiethylamine and phenacetin. Exhibits a high coumarin 7-hydroxylase activity. Converts also testosterone to androstenedione. The sequence is that of Cytochrome P450 2A10 (CYP2A10) from Oryctolagus cuniculus (Rabbit).